A 310-amino-acid chain; its full sequence is Olfactory receptor 5P54 (310 aa).

Topologically, residues 1–25 (MNGGNHTSMTELFILGPTEDPTFCI) are extracellular. The N-linked (GlcNAc...) asparagine glycan is linked to N5. The chain crosses the membrane as a helical span at residues 26–46 (AFFVIFLGVYMVTLVGNISII). Residues 47 to 54 (TLIRISSQ) are Cytoplasmic-facing. Residues 55–75 (LHTPVYLFLNHLAFVDILYST) traverse the membrane as a helical segment. The Extracellular segment spans residues 76–99 (LVSVIMLMELLEHELALPVAACAA). C97 and C189 are oxidised to a cystine. A helical transmembrane segment spans residues 100 to 120 (ELCITVLFGSSECFLLAAMAY). Over 121-133 (DCYVAICSPLLYS) the chain is Cytoplasmic. A helical membrane pass occupies residues 134-154 (TLMSSRVCFLLLGMSYVGGCM). Over 155-196 (NGWIFTGCLLNLSFYGPYQIDHFFCDFSPLLKLSCSDVSIIG) the chain is Extracellular. N165 carries an N-linked (GlcNAc...) asparagine glycan. The helical transmembrane segment at 197 to 217 (IIPSISSGSIIVVTVLVIAVF) threads the bilayer. The Cytoplasmic portion of the chain corresponds to 218–237 (YICILMTILKMHSTDGCHKA). The helical transmembrane segment at 238–258 (FSTCNSYLTAVTLYYGTITFI) threads the bilayer. Topologically, residues 259 to 271 (YVMPKSNYSTEKN) are extracellular. N265 is a glycosylation site (N-linked (GlcNAc...) asparagine). The chain crosses the membrane as a helical span at residues 272 to 292 (KVLSEFYTVVIPMLNHLIYSL). The Cytoplasmic segment spans residues 293 to 310 (KNRDVKDALRKAIVRVYT).

The protein belongs to the G-protein coupled receptor 1 family.

The protein localises to the cell membrane. Its function is as follows. Potential odorant receptor. The chain is Olfactory receptor 5P54 from Mus musculus (Mouse).